Here is a 542-residue protein sequence, read N- to C-terminus: Membrane protein insertase YidC (542 aa).

The next 6 helical transmembrane spans lie at 6–26 (NILL…WQTD), 326–346 (LVVD…LLMF), 350–370 (FVGN…GGLY), 421–441 (GGCL…WVLL), 458–478 (LSVQ…MFLM), and 501–521 (VIFT…WLVG).

It belongs to the OXA1/ALB3/YidC family. Type 1 subfamily. Interacts with the Sec translocase complex via SecD. Specifically interacts with transmembrane segments of nascent integral membrane proteins during membrane integration.

The protein localises to the cell inner membrane. Functionally, required for the insertion and/or proper folding and/or complex formation of integral membrane proteins into the membrane. Involved in integration of membrane proteins that insert both dependently and independently of the Sec translocase complex, as well as at least some lipoproteins. Aids folding of multispanning membrane proteins. In Shewanella frigidimarina (strain NCIMB 400), this protein is Membrane protein insertase YidC.